A 69-amino-acid polypeptide reads, in one-letter code: UPF0346 protein YuiB (69 aa).

Belongs to the UPF0346 family.

In Lactococcus lactis subsp. lactis (strain IL1403) (Streptococcus lactis), this protein is UPF0346 protein YuiB (yuiB).